The sequence spans 901 residues: HTH-type transcriptional regulator MalT (901 aa).

39 to 46 (SPAGYGKT) lines the ATP pocket. Residues 829-894 (ELIRTSPLTQ…DAVQHAQQLL (66 aa)) form the HTH luxR-type domain. The segment at residues 853 to 872 (NEQIAGELDVAATTIKTHIR) is a DNA-binding region (H-T-H motif).

Belongs to the MalT family. In terms of assembly, monomer in solution. Oligomerizes to an active state in the presence of the positive effectors ATP and maltotriose.

Activated by ATP and maltotriose, which are both required for DNA binding. In terms of biological role, positively regulates the transcription of the maltose regulon whose gene products are responsible for uptake and catabolism of malto-oligosaccharides. Specifically binds to the promoter region of its target genes, recognizing a short DNA motif called the MalT box. The sequence is that of HTH-type transcriptional regulator MalT from Klebsiella pneumoniae (strain 342).